The primary structure comprises 739 residues: MPFPVTTQGSQQTQPPQKHYGITSPISLAAPKETDCLLTQKLVETLKPFGVFEEEEELQRRILILGKLNNLVKEWIREISESKNLPQSVIENVGGKIFTFGSYRLGVHTKGADIDALCVAPRHVDRSDFFTSFYDKLKLQEEVKDLRAVEEAFVPVIKLCFDGIEIDILFARLALQTIPEDLDLRDDSLLKNLDIRCIRSLNGCRVTDEILHLVPNIDNFRLTLRAIKLWAKRHNIYSNILGFLGGVSWAMLVARTCQLYPNAIASTLVHKFFLVFSKWEWPNPVLLKQPEECNLNLPVWDPRVNPSDRYHLMPIITPAYPQQNSTYNVSVSTRMVMVEEFKQGLAITDEILLSKAEWSKLFEAPNFFQKYKHYIVLLASAPTEKQRLEWVGLVESKIRILVGSLEKNEFITLAHVNPQSFPAPKENPDKEEFRTMWVIGLVFKKTENSENLSVDLTYDIQSFTDTVYRQAINSKMFEVDMKIAAMHVKRKQLHQLLPSHVLQKKKKHSTEGVKLTPLNDSSLDLSMDSDNSMSVPSPTSAMKTSPLNSSGSSQGRNSPAPAVTAASVTNIQATEVSLPQINSSESSGGTSSESIPQTATQPAISSPPKPTVSRVVSSTRLVNPPPRPSGNAAAKIPNPIVGVKRTSSPHKEESPKKTKTEEDETSEDANCLALSGHDKTETKEQLDTETSTTQSETIQTATSLLASQKTSSTDLSDIPALPANPIPVIKNSIKLRLNR.

The span at 1-17 (MPFPVTTQGSQQTQPPQ) shows a compositional bias: low complexity. Positions 1–23 (MPFPVTTQGSQQTQPPQKHYGIT) are disordered. Phosphoserine occurs at positions 10 and 24. ATP-binding positions include 100-102 (FGS), threonine 109, 113-115 (DID), aspartate 167, lysine 228, tyrosine 237, and 246-247 (GV). Positions 113, 115, and 167 each coordinate Mg(2+). Glycyl lysine isopeptide (Lys-Gly) (interchain with G-Cter in SUMO) cross-links involve residues lysine 444, lysine 445, lysine 506, and lysine 507. A Nuclear localization signal 1 motif is present at residues 490 to 507 (RKQLHQLLPSHVLQKKKK). 2 disordered regions span residues 501–565 (VLQK…AVTA) and 580–700 (QINS…TIQT). The segment at 508-643 (HSTEGVKLTP…AKIPNPIVGV (136 aa)) is ser/Thr-rich. The span at 518–534 (LNDSSLDLSMDSDNSMS) shows a compositional bias: low complexity. Residues 535–557 (VPSPTSAMKTSPLNSSGSSQGRN) are compositionally biased toward polar residues. Serine 537 is subject to Phosphoserine; by MAPK. Serine 558 carries the phosphoserine modification. Low complexity predominate over residues 583-594 (SSESSGGTSSES). Residues 595–604 (IPQTATQPAI) are compositionally biased toward polar residues. The segment covering 611–620 (TVSRVVSSTR) has biased composition (low complexity). Lysine 635 and lysine 644 each carry N6-acetyllysine. The short motif at 644–659 (KRTSSPHKEESPKKTK) is the Nuclear localization signal 2 element. Composition is skewed to basic and acidic residues over residues 649-660 (PHKEESPKKTKT) and 676-686 (GHDKTETKEQL). The segment at 671–739 (CLALSGHDKT…KNSIKLRLNR (69 aa)) is required for interaction with NUDT21. Residues 688-700 (TETSTTQSETIQT) show a composition bias toward low complexity. An N6-acetyllysine; alternate modification is found at lysine 730. Lysine 730 participates in a covalent cross-link: Glycyl lysine isopeptide (Lys-Gly) (interchain with G-Cter in SUMO); alternate. Serine 732 is modified (phosphoserine). An N6-acetyllysine; alternate modification is found at lysine 734. Lysine 734 is covalently cross-linked (Glycyl lysine isopeptide (Lys-Gly) (interchain with G-Cter in SUMO); alternate).

The protein belongs to the poly(A) polymerase family. In terms of assembly, monomer. Found in a complex with CPSF1, FIP1L1 and PAPOLA. Interacts with AHCYL1 and FIP1L1; the interaction with AHCYL1 seems to increase interaction with FIP1L1. Interacts with NUDT21; the interaction is diminished by acetylation. Interacts with KPNB1; the interaction promotes PAP nuclear import and is inhibited by acetylation of PAP. Mg(2+) serves as cofactor. Requires Mn(2+) as cofactor. Post-translationally, polysumoylated. Varying sumoylation depending on tissue- and cell-type. Highly sumoylated in bladder and NIH 3T3 cells. Sumoylation is required for nuclear localization and enhances PAP stability. Desumoylated by SENP1. Inhibits polymerase activity. In terms of processing, hyperphosphorylation on multiple CDK2 consensus and non-consensus sites in the C-terminal Ser/Thr-rich region represses PAP activity in late M-phase. Phosphorylation/dephosphorylation may regulate the interaction between PAP and CPSF. Acetylated in the C-terminus. Acetylation decreases interaction with NUDT21 and KPNB1, and inhibits nuclear localization through inhibiting binding to the importin alpha/beta complex.

The protein resides in the nucleus. It carries out the reaction RNA(n) + ATP = RNA(n)-3'-adenine ribonucleotide + diphosphate. In terms of biological role, polymerase that creates the 3'-poly(A) tail of mRNA's. Also required for the endoribonucleolytic cleavage reaction at some polyadenylation sites. May acquire specificity through interaction with a cleavage and polyadenylation specificity factor (CPSF) at its C-terminus. The protein is Poly(A) polymerase alpha (PAPOLA) of Bos taurus (Bovine).